Consider the following 173-residue polypeptide: MGKIIFYEDRNFQGRHYECSSDCADLSPYFSRCNSIRVESDWWVLYEKPNYMGYQYVLTRGEYPDYQRWMGFNDCVRSCRMLPHTGRSYRMRIYERLTFGGQMMEIMDDCPSVYDRFRYRDIHSCQVMDGYWIFYEHPNYRGRQYFMRPGEYRRYSDWGGYSSTVGSLRRIME.

Beta/gamma crystallin 'Greek key' domains are found at residues glycine 2–serine 40 and aspartate 41–proline 83. Positions histidine 84 to serine 88 are connecting peptide. 2 Beta/gamma crystallin 'Greek key' domains span residues tyrosine 89 to aspartate 129 and glycine 130 to methionine 172.

This sequence belongs to the beta/gamma-crystallin family.

In terms of biological role, crystallins are the dominant structural components of the vertebrate eye lens. The chain is Gamma-crystallin S-1 (GS-1) from Chiloscyllium indicum (Slender bamboo shark).